A 502-amino-acid polypeptide reads, in one-letter code: Glycerol kinase (502 aa).

T14 contributes to the ADP binding site. ATP is bound by residues T14, T15, and S16. T14 provides a ligand contact to sn-glycerol 3-phosphate. R18 is a binding site for ADP. Sn-glycerol 3-phosphate is bound by residues R84, E85, Y136, and D246. Residues R84, E85, Y136, D246, and Q247 each contribute to the glycerol site. ADP-binding residues include T268 and G311. Residues T268, G311, Q315, and G412 each coordinate ATP. Residues G412 and N416 each contribute to the ADP site.

Belongs to the FGGY kinase family. As to quaternary structure, homotetramer and homodimer (in equilibrium). Heterodimer with EIIA-Glc. Binds 1 zinc ion per glycerol kinase EIIA-Glc dimer. The zinc ion is important for dimerization.

It catalyses the reaction glycerol + ATP = sn-glycerol 3-phosphate + ADP + H(+). It functions in the pathway polyol metabolism; glycerol degradation via glycerol kinase pathway; sn-glycerol 3-phosphate from glycerol: step 1/1. Activity of this regulatory enzyme is affected by several metabolites. Allosterically and non-competitively inhibited by fructose 1,6-bisphosphate (FBP) and unphosphorylated phosphocarrier protein EIIA-Glc (III-Glc), an integral component of the bacterial phosphotransferase (PTS) system. Its function is as follows. Key enzyme in the regulation of glycerol uptake and metabolism. Catalyzes the phosphorylation of glycerol to yield sn-glycerol 3-phosphate. The sequence is that of Glycerol kinase from Salmonella arizonae (strain ATCC BAA-731 / CDC346-86 / RSK2980).